Reading from the N-terminus, the 319-residue chain is Annexin D4 (319 aa).

2 Annexin repeats span residues 1 to 75 (MALP…EFSR) and 86 to 157 (HPWE…GLVS). 3 residues coordinate Ca(2+): G19, G21, and E72. Phosphothreonine is present on T115. Phosphotyrosine occurs at positions 159 and 211. Annexin repeat units lie at residues 169–240 (DSAK…ICLL) and 241–316 (KPAL…TLLS). S277 bears the Phosphoserine mark. Y287 is modified (phosphotyrosine).

This sequence belongs to the annexin (TC 1.A.31.1) family. Expressed mainly in roots and flowers. Lower in stems and leaves.

Functionally, may be involved in osmotic stress and abscisic acid signaling in a calcium-dependent manner. The chain is Annexin D4 (ANN4) from Arabidopsis thaliana (Mouse-ear cress).